A 558-amino-acid chain; its full sequence is Chaperonin GroEL 1 (558 aa).

Residues 29–32 (TLGP), 86–90 (DGTTT), Gly413, and Asp494 contribute to the ATP site.

Belongs to the chaperonin (HSP60) family. Forms a cylinder of 14 subunits composed of two heptameric rings stacked back-to-back. Interacts with the co-chaperonin GroES.

The protein localises to the cytoplasm. It carries out the reaction ATP + H2O + a folded polypeptide = ADP + phosphate + an unfolded polypeptide.. Together with its co-chaperonin GroES, plays an essential role in assisting protein folding. The GroEL-GroES system forms a nano-cage that allows encapsulation of the non-native substrate proteins and provides a physical environment optimized to promote and accelerate protein folding. This chain is Chaperonin GroEL 1, found in Acaryochloris marina (strain MBIC 11017).